Consider the following 1290-residue polypeptide: 1-phosphatidylinositol 4,5-bisphosphate phosphodiesterase gamma-1 (1290 aa).

Residue alanine 2 is modified to N-acetylalanine. The PH 1 domain maps to 27–142 (RSLEVGTVMT…WIKGLTWLME (116 aa)). In terms of domain architecture, EF-hand spans 152 to 187 (QIERWLRKQFYSVDRNREDRISAKDLKNMLSQVNYR). Ca(2+)-binding residues include aspartate 165, asparagine 167, glutamate 169, arginine 171, and aspartate 176. In terms of domain architecture, PI-PLC X-box spans 320–464 (ETMNNPLSHY…LKRKILIKHK (145 aa)). Residues histidine 335 and histidine 380 contribute to the active site. Positions 489 to 523 (SIKNGILYLEDPVNHEWYPHYFVLTSSKIYYSEET) constitute a PH 2; first part domain. At tyrosine 506 the chain carries Phosphotyrosine. The tract at residues 522-546 (ETSSDQGNEDEEEPKEASGSTELHS) is disordered. SH2 domains follow at residues 550 to 657 (WFHG…SEPV) and 668 to 756 (WYHA…RYPI). Tyrosine 771 carries the post-translational modification Phosphotyrosine; by SYK. Tyrosine 775 carries the phosphotyrosine modification. Tyrosine 783 bears the Phosphotyrosine; by ITK, SYK and TXK mark. One can recognise an SH3 domain in the interval 791-851 (TFKCAVKALF…PSNYVEEMIN (61 aa)). Residues 895–931 (FVFSISMPSVAQWSLDVAADSQEELQDWVKKIREVAQ) enclose the PH 2; second part domain. In terms of domain architecture, PI-PLC Y-box spans 953 to 1070 (LSELVVYCRP…GYVLQPSTMR (118 aa)). A Phosphotyrosine modification is found at tyrosine 977. In terms of domain architecture, C2 spans 1071–1194 (DEAFDPFDKS…TGYRAVPLKN (124 aa)). 4 positions are modified to phosphoserine: serine 1221, serine 1227, serine 1233, and serine 1248. Tyrosine 1253 carries the phosphotyrosine modification. Serine 1263 is subject to Phosphoserine. The segment at 1271–1290 (FDSRERRAPRRTRVNGDNRL) is disordered.

As to quaternary structure, interacts with AGAP2 via its SH3 domain. Interacts (via SH2 domain) with RET. Interacts with FLT1 (tyrosine-phosphorylated). Interacts (via SH2 domain) with FGFR1, FGFR2, FGFR3 and FGFR4 (phosphorylated). Interacts with LAT (phosphorylated) upon TCR activation. Interacts (via SH3 domain) with the Pro-rich domain of TNK1. Associates with BLNK, VAV1, GRB2 and NCK1 in a B-cell antigen receptor-dependent fashion. Interacts with CBLB in activated T-cells; which inhibits phosphorylation. Interacts with SHB. Interacts (via SH3 domain) with the Arg/Gly-rich-flanked Pro-rich domains of KHDRBS1/SAM68. This interaction is selectively regulated by arginine methylation of KHDRBS1/SAM68. Interacts with INPP5D/SHIP1, THEMIS and CLNK. Interacts with AXL, FLT4 and KIT. Interacts with RALGPS1. Interacts (via the SH2 domains) with VIL1 (phosphorylated at C-terminus tyrosine phosphorylation sites). Interacts (via SH2 domain) with PDGFRA and PDGFRB (tyrosine phosphorylated). Interacts with PIP5K1C. Interacts with NTRK1 and NTRK2 (phosphorylated upon ligand-binding). Interacts with SYK; activates PLCG1. Interacts with GRB2, LAT and THEMIS upon TCR activation in thymocytes. Interacts with TESPA1; the association is increased with prolonged stimulation of the TCR and may facilitate the assembly of the LAT signalosome. Interacts (via C-terminal proline-rich domain (PRD)) with PLCG1 (via SH3 domain); this interaction leads to guanine nucleotide exchange from PlCG1 to DNM1 and enhances DNM1-dependent endocytosis. Requires Ca(2+) as cofactor. In terms of processing, ubiquitinated by CBLB in activated T-cells. Tyrosine phosphorylated in response to signaling via activated FLT3, KIT and PDGFRA. Tyrosine phosphorylated by activated FGFR1, FGFR2, FGFR3 and FGFR4. Tyrosine phosphorylated by activated FLT1 and KDR. Tyrosine phosphorylated by activated PDGFRB. The receptor-mediated activation of PLCG1 involves its phosphorylation by tyrosine kinases, in response to ligation of a variety of growth factor receptors and immune system receptors. For instance, SYK phosphorylates and activates PLCG1 in response to ligation of the B-cell receptor. May be dephosphorylated by PTPRJ. Phosphorylated by ITK and TXK on Tyr-783 upon TCR activation in T-cells.

It localises to the cell projection. Its subcellular location is the lamellipodium. The protein resides in the ruffle. The catalysed reaction is a 1,2-diacyl-sn-glycero-3-phospho-(1D-myo-inositol-4,5-bisphosphate) + H2O = 1D-myo-inositol 1,4,5-trisphosphate + a 1,2-diacyl-sn-glycerol + H(+). The enzyme catalyses a 1,2-diacyl-sn-glycero-3-phospho-(1D-myo-inositol) + H2O = 1D-myo-inositol 1-phosphate + a 1,2-diacyl-sn-glycerol + H(+). With respect to regulation, activated by phosphorylation on tyrosine residues. Functionally, mediates the production of the second messenger molecules diacylglycerol (DAG) and inositol 1,4,5-trisphosphate (IP3). Plays an important role in the regulation of intracellular signaling cascades. Becomes activated in response to ligand-mediated activation of receptor-type tyrosine kinases, such as PDGFRA, PDGFRB, EGFR, FGFR1, FGFR2, FGFR3 and FGFR4. Plays a role in actin reorganization and cell migration. Guanine nucleotide exchange factor that binds the GTPase DNM1 and catalyzes the dissociation of GDP, allowing a GTP molecule to bind in its place, therefore enhancing DNM1-dependent endocytosis. In Rattus norvegicus (Rat), this protein is 1-phosphatidylinositol 4,5-bisphosphate phosphodiesterase gamma-1.